We begin with the raw amino-acid sequence, 455 residues long: Nuclear distribution protein nudF (455 aa).

The 33-residue stretch at 9 to 41 (QAEELHKSMIAYLVASDLPDTAAALRREVNLSE) folds into the LisH domain. Positions 61-88 (TSIARLQKKIMDLESRNATLQSELDNST) form a coiled coil. WD repeat units lie at residues 113–154 (SHRD…RTLK), 156–196 (HTRA…KNIR), 200–239 (GHDH…CVKT), 242–281 (GHTD…NIEH), 287–347 (GHEN…LMTL), 349–388 (GHDS…KCVK), 392–438 (AHES…IQMR), and 440–455 (VVAT…IFAG). Residues 408–431 (KNVPGGDGAAEGEGNDKNGAGSEN) form a disordered region.

The protein belongs to the WD repeat LIS1/nudF family. As to quaternary structure, self-associates. Interacts with nudE and dynein.

It is found in the cytoplasm. The protein localises to the cytoskeleton. The protein resides in the spindle pole. In terms of biological role, positively regulates the activity of the minus-end directed microtubule motor protein dynein. May enhance dynein-mediated microtubule sliding by targeting dynein to the microtubule plus end. Required for nuclear migration during vegetative growth as well as development. Required for retrograde early endosome (EE) transport from the hyphal tip. Required for localization of dynein to the mitotic spindle poles. Recruits additional proteins to the dynein complex at SPBs. The chain is Nuclear distribution protein nudF from Aspergillus flavus (strain ATCC 200026 / FGSC A1120 / IAM 13836 / NRRL 3357 / JCM 12722 / SRRC 167).